The primary structure comprises 282 residues: Elongation factor Ts (282 aa).

Positions 80-83 (TDFV) are involved in Mg(2+) ion dislocation from EF-Tu.

The protein belongs to the EF-Ts family.

It is found in the cytoplasm. Its function is as follows. Associates with the EF-Tu.GDP complex and induces the exchange of GDP to GTP. It remains bound to the aminoacyl-tRNA.EF-Tu.GTP complex up to the GTP hydrolysis stage on the ribosome. The sequence is that of Elongation factor Ts from Chlamydia caviae (strain ATCC VR-813 / DSM 19441 / 03DC25 / GPIC) (Chlamydophila caviae).